A 592-amino-acid chain; its full sequence is Aspartate--tRNA ligase (592 aa).

An L-aspartate-binding site is contributed by E173. The aspartate stretch occupies residues 197 to 200 (QLFK). R219 is an L-aspartate binding site. ATP is bound by residues 219-221 (RDE) and Q228. Residue H448 participates in L-aspartate binding. ATP is bound at residue E482. L-aspartate is bound at residue R489. 534-537 (GLDR) provides a ligand contact to ATP.

The protein belongs to the class-II aminoacyl-tRNA synthetase family. Type 1 subfamily. Homodimer.

The protein localises to the cytoplasm. It carries out the reaction tRNA(Asp) + L-aspartate + ATP = L-aspartyl-tRNA(Asp) + AMP + diphosphate. Its function is as follows. Catalyzes the attachment of L-aspartate to tRNA(Asp) in a two-step reaction: L-aspartate is first activated by ATP to form Asp-AMP and then transferred to the acceptor end of tRNA(Asp). This chain is Aspartate--tRNA ligase, found in Shewanella baltica (strain OS195).